Consider the following 408-residue polypeptide: Two-pore potassium channel 5 (408 aa).

Disordered stretches follow at residues 1–29 and 58–82; these read MEPL…SASI and QSVQ…SQTR. Low complexity predominate over residues 15–29; it reads PIPENPSSSSSSASI. Over 22–115 the chain is Stromal; it reads SSSSSASITI…TKKPSPVSKS (94 aa). Residues 63–72 show a composition bias toward acidic residues; that stretch reads DKEDQDSDSD. A helical transmembrane segment spans residues 116–136; sequence IIRQAIFLLIVYLTLGVSIYS. The pore-forming intramembrane region spans 152–171; that stretch reads DALYFCIVTMCTIGYGDIAP. The chain crosses the membrane as a helical span at residues 178–198; sequence IFAVVFVLFGFGFLDILLSGV. Residues 199 to 248 lie on the Stromal side of the membrane; that stretch reads VNYVLDLQESMILTGIQTRQHHQHHHHHRFSAKDYIIDFEKGRMRIRMKV. The helical transmembrane segment at 249–269 threads the bilayer; sequence CLALCVVVLCIGVGALVLHFV. The segment at residues 276–295 is an intramembrane region (pore-forming); it reads DSVYLSVMSVTTVGYGDRAF. The chain crosses the membrane as a helical span at residues 302–322; that stretch reads LFAAVWLLVSTLAVARAFLYL. Topologically, residues 323-408 are stromal; sequence AEARIDRRHR…TLPDLLGDPL (86 aa). 2 EF-hand domains span residues 339-374 and 378-408; these read LNRE…EMGK and KDID…GDPL. Residues Asp-352, Glu-363, Asp-391, Asn-393, Lys-397, and Asp-402 each contribute to the Ca(2+) site.

The protein belongs to the two pore domain potassium channel (TC 1.A.1.7) family. In terms of assembly, homodimer. Expressed in hydathodes and the vascular tissues of roots, stems, leaves and flowers.

The protein resides in the vacuole membrane. Probable voltage-independent potassium-selective tonoplast ion channel. In Arabidopsis thaliana (Mouse-ear cress), this protein is Two-pore potassium channel 5 (TPK5).